A 953-amino-acid chain; its full sequence is Pyruvate, phosphate dikinase, chloroplastic (953 aa).

The transit peptide at 1–77 (MMSSLSVEGM…VLNPVSPPVT (77 aa)) directs the protein to the chloroplast. A disordered region spans residues 55 to 74 (PELRSSGLTPPRAVLNPVSP). Thr-533 carries the phosphothreonine; by PDRP1 modification. The Tele-phosphohistidine intermediate role is filled by His-535. Residues Arg-641, Arg-698, Glu-827, Gly-848, Thr-849, Asn-850, and Asp-851 each coordinate substrate. Position 827 (Glu-827) interacts with Mg(2+). Asp-851 lines the Mg(2+) pocket. The Proton donor role is filled by Cys-913.

It belongs to the PEP-utilizing enzyme family. Homotetramer. It depends on Mg(2+) as a cofactor. Phosphorylation of Thr-533 in the dark inactivates the enzyme. Dephosphorylation upon light stimulation reactivates the enzyme. In terms of tissue distribution, isoform 1 mainly localized in mesophyll cells and only a low level is found in bundle sheath cells. Isoform 2 is expressed in roots and stems.

The protein localises to the plastid. Its subcellular location is the chloroplast. The protein resides in the cytoplasm. The enzyme catalyses pyruvate + phosphate + ATP = phosphoenolpyruvate + AMP + diphosphate + H(+). It participates in photosynthesis; C4 acid pathway. Activated by light-induced dephosphorylation. Inhibited by dark-induced phosphorylation. Both reactions are catalyzed by PDRP1. Its function is as follows. Formation of phosphoenolpyruvate, which is the primary acceptor of CO(2) in C4 and some Crassulacean acid metabolism plants. This Flaveria trinervia (Clustered yellowtops) protein is Pyruvate, phosphate dikinase, chloroplastic (PPDK).